The sequence spans 149 residues: Alpha-crystallin A chain (149 aa).

The region spanning 41–149 is the sHSP domain; sequence LFRSVLESGI…DPTHSERPIP (109 aa). Zn(2+)-binding residues include histidine 89, glutamate 91, histidine 96, and histidine 143.

Belongs to the small heat shock protein (HSP20) family. As to quaternary structure, heteropolymer composed of three CRYAA and one CRYAB subunits. Inter-subunit bridging via zinc ions enhances stability, which is crucial as there is no protein turn over in the lens. Can also form homodimers and homotetramers (dimers of dimers) which serve as the building blocks of homooligomers. Within homooligomers, the zinc-binding motif is created from residues of 3 different molecules. His-89 and Glu-91 from one molecule are ligands of the zinc ion, and His-96 and His-143 residues from additional molecules complete the site with tetrahedral coordination geometry.

It is found in the cytoplasm. It localises to the nucleus. Functionally, contributes to the transparency and refractive index of the lens. May act as a chaperone, preventing aggregation of various proteins under a wide range of stress conditions. The chain is Alpha-crystallin A chain (CRYAA) from Anas platyrhynchos (Mallard).